Here is a 317-residue protein sequence, read N- to C-terminus: Acetyl-coenzyme A carboxylase carboxyl transferase subunit alpha (317 aa).

One can recognise a CoA carboxyltransferase C-terminal domain in the interval 37-292 (RLEKKAEKLR…RICLKKHLDD (256 aa)).

This sequence belongs to the AccA family. Acetyl-CoA carboxylase is a heterohexamer composed of biotin carboxyl carrier protein (AccB), biotin carboxylase (AccC) and two subunits each of ACCase subunit alpha (AccA) and ACCase subunit beta (AccD).

It localises to the cytoplasm. The catalysed reaction is N(6)-carboxybiotinyl-L-lysyl-[protein] + acetyl-CoA = N(6)-biotinyl-L-lysyl-[protein] + malonyl-CoA. It functions in the pathway lipid metabolism; malonyl-CoA biosynthesis; malonyl-CoA from acetyl-CoA: step 1/1. Functionally, component of the acetyl coenzyme A carboxylase (ACC) complex. First, biotin carboxylase catalyzes the carboxylation of biotin on its carrier protein (BCCP) and then the CO(2) group is transferred by the carboxyltransferase to acetyl-CoA to form malonyl-CoA. The chain is Acetyl-coenzyme A carboxylase carboxyl transferase subunit alpha from Syntrophotalea carbinolica (strain DSM 2380 / NBRC 103641 / GraBd1) (Pelobacter carbinolicus).